Reading from the N-terminus, the 240-residue chain is Glutathione S-transferase theta-1 (240 aa).

One can recognise a GST N-terminal domain in the interval 2–82 (VLELYLDLLS…YLAHKYKVPD (81 aa)). Glutathione-binding positions include His40, 53–54 (RV), and 66–67 (ES). Residues 88–222 (DLQARARVDE…VILKVKDCPP (135 aa)) enclose the GST C-terminal domain.

The protein belongs to the GST superfamily. Theta family. Homodimer. In liver, highest expression found in central vein limiting plate hepatocytes. Also expressed in interlobular bile duct epithelial cells. In lung, expressed in club cells and ciliated cells of the bronchiolar epithelium and in type II alveolar cells of the lung parenchyma.

Its subcellular location is the cytoplasm. The protein localises to the nucleus. The catalysed reaction is RX + glutathione = an S-substituted glutathione + a halide anion + H(+). Conjugation of reduced glutathione to a wide number of exogenous and endogenous hydrophobic electrophiles. Also binds steroids, bilirubin, carcinogens and numerous organic anions. Has dichloromethane dehalogenase activity. This is Glutathione S-transferase theta-1 (Gstt1) from Mus musculus (Mouse).